The primary structure comprises 165 residues: Phosphopantetheine adenylyltransferase (165 aa).

Thr9 contributes to the substrate binding site. ATP contacts are provided by residues 9–10 and His17; that span reads TF. Positions 41, 78, and 92 each coordinate substrate. ATP-binding positions include 93-95, Glu103, and 128-134; these read GLR and RQAIASK.

The protein belongs to the bacterial CoaD family. In terms of assembly, homohexamer. Mg(2+) serves as cofactor.

The protein resides in the cytoplasm. It carries out the reaction (R)-4'-phosphopantetheine + ATP + H(+) = 3'-dephospho-CoA + diphosphate. It functions in the pathway cofactor biosynthesis; coenzyme A biosynthesis; CoA from (R)-pantothenate: step 4/5. Reversibly transfers an adenylyl group from ATP to 4'-phosphopantetheine, yielding dephospho-CoA (dPCoA) and pyrophosphate. This is Phosphopantetheine adenylyltransferase from Ruegeria pomeroyi (strain ATCC 700808 / DSM 15171 / DSS-3) (Silicibacter pomeroyi).